The chain runs to 185 residues: Deoxyuridine 5'-triphosphate nucleotidohydrolase (185 aa).

The interval 1–23 is disordered; it reads MSHLQAHMQRNNKESHSLSPFSQ. Substrate contacts are provided by residues 95-97, asparagine 108, 112-114, and lysine 122; these read RSG and TID. The interval 160 to 185 is disordered; that stretch reads DQKDSSQTPSNEGSRGADGFGSTGHD. The segment covering 175–185 has biased composition (gly residues); sequence GADGFGSTGHD.

This sequence belongs to the dUTPase family. Requires Mg(2+) as cofactor.

The enzyme catalyses dUTP + H2O = dUMP + diphosphate + H(+). It participates in pyrimidine metabolism; dUMP biosynthesis; dUMP from dCTP (dUTP route): step 2/2. This enzyme is involved in nucleotide metabolism: it produces dUMP, the immediate precursor of thymidine nucleotides and it decreases the intracellular concentration of dUTP so that uracil cannot be incorporated into DNA. In Bartonella quintana (strain Toulouse) (Rochalimaea quintana), this protein is Deoxyuridine 5'-triphosphate nucleotidohydrolase.